The chain runs to 95 residues: uncharacterized protein (95 aa).

Its function is as follows. The presence of the two linear plasmids, termed pGKL1 and pGKL2, in strains of Kluyveromyces lactis confers the killer phenotype to the host cell, by promoting the secretion of a toxin able to inhibit the growth of sensitive strains. This is an uncharacterized protein from Kluyveromyces lactis (strain ATCC 8585 / CBS 2359 / DSM 70799 / NBRC 1267 / NRRL Y-1140 / WM37) (Yeast).